Here is a 128-residue protein sequence, read N- to C-terminus: Fluoride-specific ion channel FluC (128 aa).

A run of 4 helical transmembrane segments spans residues 5 to 25 (ALVALGSAIGGTLRYWLSMVI), 32 to 52 (TFPWATLVINVAGSAAIGLFA), 70 to 90 (FFMVGICGGFTTFSSFSLQTL), and 106 to 126 (VGSVALCLLAVWLGHVAATII). 2 residues coordinate Na(+): G77 and T80.

It belongs to the fluoride channel Fluc/FEX (TC 1.A.43) family.

It is found in the cell inner membrane. It carries out the reaction fluoride(in) = fluoride(out). With respect to regulation, na(+) is not transported, but it plays an essential structural role and its presence is essential for fluoride channel function. In terms of biological role, fluoride-specific ion channel. Important for reducing fluoride concentration in the cell, thus reducing its toxicity. The polypeptide is Fluoride-specific ion channel FluC (Paramagnetospirillum magneticum (strain ATCC 700264 / AMB-1) (Magnetospirillum magneticum)).